We begin with the raw amino-acid sequence, 407 residues long: 4-hydroxy-3-methylbut-2-en-1-yl diphosphate synthase (flavodoxin) (407 aa).

[4Fe-4S] cluster is bound by residues Cys296, Cys299, Cys342, and Glu349.

It belongs to the IspG family. Requires [4Fe-4S] cluster as cofactor.

The catalysed reaction is (2E)-4-hydroxy-3-methylbut-2-enyl diphosphate + oxidized [flavodoxin] + H2O + 2 H(+) = 2-C-methyl-D-erythritol 2,4-cyclic diphosphate + reduced [flavodoxin]. Its pathway is isoprenoid biosynthesis; isopentenyl diphosphate biosynthesis via DXP pathway; isopentenyl diphosphate from 1-deoxy-D-xylulose 5-phosphate: step 5/6. In terms of biological role, converts 2C-methyl-D-erythritol 2,4-cyclodiphosphate (ME-2,4cPP) into 1-hydroxy-2-methyl-2-(E)-butenyl 4-diphosphate. The chain is 4-hydroxy-3-methylbut-2-en-1-yl diphosphate synthase (flavodoxin) from Methylococcus capsulatus (strain ATCC 33009 / NCIMB 11132 / Bath).